A 435-amino-acid chain; its full sequence is Gamma-glutamyl phosphate reductase (435 aa).

The protein belongs to the gamma-glutamyl phosphate reductase family.

The protein resides in the cytoplasm. The enzyme catalyses L-glutamate 5-semialdehyde + phosphate + NADP(+) = L-glutamyl 5-phosphate + NADPH + H(+). Its pathway is amino-acid biosynthesis; L-proline biosynthesis; L-glutamate 5-semialdehyde from L-glutamate: step 2/2. Its function is as follows. Catalyzes the NADPH-dependent reduction of L-glutamate 5-phosphate into L-glutamate 5-semialdehyde and phosphate. The product spontaneously undergoes cyclization to form 1-pyrroline-5-carboxylate. In Aquifex aeolicus (strain VF5), this protein is Gamma-glutamyl phosphate reductase.